A 198-amino-acid chain; its full sequence is Recombination protein RecR (198 aa).

Residues 57-72 (CSICGNLTDQDPCAIC) form a C4-type zinc finger. The 96-residue stretch at 80–175 (STILIVEDSR…KVTRLARGLA (96 aa)) folds into the Toprim domain.

This sequence belongs to the RecR family.

In terms of biological role, may play a role in DNA repair. It seems to be involved in an RecBC-independent recombinational process of DNA repair. It may act with RecF and RecO. The chain is Recombination protein RecR from Streptococcus suis (strain 05ZYH33).